Here is a 1053-residue protein sequence, read N- to C-terminus: Middle cell wall protein (1053 aa).

An N-terminal signal peptide occupies residues 1–23; sequence MKKVVNSVLASALALTVAPMAFA. 3 consecutive SLH domains span residues 26-89, 90-153, and 154-203; these read EAAT…KLAQ, FSNT…KGVW, and PNSM…FGTD.

As to quaternary structure, the middle cell wall layer is composed of subunits of the middle cell wall protein. These proteins form a hexagonal array with a lattice constant of 14.5 nM in the middle cell wall layers.

The protein resides in the secreted. Its subcellular location is the cell wall. It localises to the S-layer. Functionally, the middle wall protein binds to peptidoglycan and to the outer cell wall protein. The sequence is that of Middle cell wall protein from Brevibacillus brevis (strain 47 / JCM 6285 / NBRC 100599).